The chain runs to 103 residues: Small ribosomal subunit protein uS10 (103 aa).

It belongs to the universal ribosomal protein uS10 family. As to quaternary structure, part of the 30S ribosomal subunit.

Its function is as follows. Involved in the binding of tRNA to the ribosomes. The sequence is that of Small ribosomal subunit protein uS10 from Pectobacterium atrosepticum (strain SCRI 1043 / ATCC BAA-672) (Erwinia carotovora subsp. atroseptica).